The following is a 929-amino-acid chain: SED5-binding protein 3 (929 aa).

Ser15 is modified (phosphoserine). Residues 18–28 show a composition bias toward polar residues; it reads ESTVHTGGASS. The interval 18 to 52 is disordered; the sequence is ESTVHTGGASSKKSRRPHRAYHNFSSGTVPTLGNS. Residues 29-38 show a composition bias toward basic residues; it reads KKSRRPHRAY. The segment covering 40–52 has biased composition (polar residues); that stretch reads NFSSGTVPTLGNS. Thr72 is modified (phosphothreonine). Residues Ser83, Ser85, Ser94, Ser101, and Ser110 each carry the phosphoserine modification. Residue Thr216 is modified to Phosphothreonine. The interval 220 to 244 is zinc finger-like; sequence CRRCRAYANPKFQFTYDSSVICNIC.

This sequence belongs to the SEC23/SEC24 family. SEC24 subfamily. COPII is composed of at least five proteins: the SEC23/24 complex, the SEC13/31 complex and SAR1. Binds to SED5. Interacts with GHR1.

It is found in the cytoplasm. Its subcellular location is the golgi apparatus membrane. The protein localises to the endoplasmic reticulum membrane. Component of the COPII coat, that covers ER-derived vesicles involved in transport from the endoplasmic reticulum to the Golgi apparatus. COPII acts in the cytoplasm to promote the transport of secretory, plasma membrane, and vacuolar proteins from the endoplasmic reticulum to the Golgi complex. The chain is SED5-binding protein 3 (SFB3) from Saccharomyces cerevisiae (strain ATCC 204508 / S288c) (Baker's yeast).